Consider the following 330-residue polypeptide: Phosphate acyltransferase (330 aa).

It belongs to the PlsX family. In terms of assembly, homodimer. Probably interacts with PlsY.

It localises to the cytoplasm. It carries out the reaction a fatty acyl-[ACP] + phosphate = an acyl phosphate + holo-[ACP]. Its pathway is lipid metabolism; phospholipid metabolism. Functionally, catalyzes the reversible formation of acyl-phosphate (acyl-PO(4)) from acyl-[acyl-carrier-protein] (acyl-ACP). This enzyme utilizes acyl-ACP as fatty acyl donor, but not acyl-CoA. The protein is Phosphate acyltransferase of Lactobacillus delbrueckii subsp. bulgaricus (strain ATCC 11842 / DSM 20081 / BCRC 10696 / JCM 1002 / NBRC 13953 / NCIMB 11778 / NCTC 12712 / WDCM 00102 / Lb 14).